The chain runs to 592 residues: Aspartate--tRNA(Asp/Asn) ligase (592 aa).

Glu-175 is a binding site for L-aspartate. Residues 199–202 are aspartate; the sequence is QQFK. The L-aspartate site is built by Arg-221 and His-451. 221-223 contributes to the ATP binding site; that stretch reads RDE. Glu-485 is an ATP binding site. Arg-492 is a binding site for L-aspartate. Position 537–540 (537–540) interacts with ATP; the sequence is GIDR.

This sequence belongs to the class-II aminoacyl-tRNA synthetase family. Type 1 subfamily. Homodimer.

Its subcellular location is the cytoplasm. It catalyses the reaction tRNA(Asx) + L-aspartate + ATP = L-aspartyl-tRNA(Asx) + AMP + diphosphate. Aspartyl-tRNA synthetase with relaxed tRNA specificity since it is able to aspartylate not only its cognate tRNA(Asp) but also tRNA(Asn). Reaction proceeds in two steps: L-aspartate is first activated by ATP to form Asp-AMP and then transferred to the acceptor end of tRNA(Asp/Asn). The polypeptide is Aspartate--tRNA(Asp/Asn) ligase (Phenylobacterium zucineum (strain HLK1)).